A 174-amino-acid chain; its full sequence is Trypsin inhibitor (174 aa).

2 disulfide bridges follow: cysteine 40/cysteine 86 and cysteine 131/cysteine 140.

The protein belongs to the protease inhibitor I3 (leguminous Kunitz-type inhibitor) family. As to quaternary structure, heterodimer of an alpha and a beta chain linked by a disulfide bond.

Inhibits trypsin and chymotrypsin with a 1:1 stoichiometry, with dissociation constants of 1.56 nM and 120 nM respectively. Inhibits plasma kallikrein, factor XIIa and plasmin with dissociation constants of 5.0 nM, 150 nM and 18 nM respectively. Does not inhibit factor Xa, thrombin, tissue kallikrein or cysteine proteinases such as papain and bromelain. This Enterolobium contortisiliquum (Pacara earpod tree) protein is Trypsin inhibitor.